Consider the following 226-residue polypeptide: Leucyl/phenylalanyl-tRNA--protein transferase (226 aa).

It belongs to the L/F-transferase family.

Its subcellular location is the cytoplasm. It catalyses the reaction N-terminal L-lysyl-[protein] + L-leucyl-tRNA(Leu) = N-terminal L-leucyl-L-lysyl-[protein] + tRNA(Leu) + H(+). The enzyme catalyses N-terminal L-arginyl-[protein] + L-leucyl-tRNA(Leu) = N-terminal L-leucyl-L-arginyl-[protein] + tRNA(Leu) + H(+). The catalysed reaction is L-phenylalanyl-tRNA(Phe) + an N-terminal L-alpha-aminoacyl-[protein] = an N-terminal L-phenylalanyl-L-alpha-aminoacyl-[protein] + tRNA(Phe). Functionally, functions in the N-end rule pathway of protein degradation where it conjugates Leu, Phe and, less efficiently, Met from aminoacyl-tRNAs to the N-termini of proteins containing an N-terminal arginine or lysine. The protein is Leucyl/phenylalanyl-tRNA--protein transferase of Pseudomonas fluorescens (strain SBW25).